The sequence spans 160 residues: Vesicle transport protein SFT2B (160 aa).

At Met1 the chain carries N-acetylmethionine. The Cytoplasmic segment spans residues 1 to 36; that stretch reads MDKLKKVLSGQDTEDRSGLSEVVEASSLSWSTRIKG. Phosphoserine is present on Ser9. A helical transmembrane segment spans residues 37-57; it reads FIACFAIGILCSLLGTVLLWV. Residues 58-63 lie on the Lumenal side of the membrane; the sequence is PRKGLH. Residues 64 to 84 form a helical membrane-spanning segment; that stretch reads LFAVFYTFGNIASIGSTIFLM. Residues 85–98 are Cytoplasmic-facing; sequence GPVKQLKRMFEPTR. A helical membrane pass occupies residues 99–119; it reads LIATIMVLLCFALTLCSAFWW. At 120-123 the chain is on the lumenal side; it reads HNKG. The helical transmembrane segment at 124-144 threads the bilayer; it reads LALIFCILQSLALTWYSLSFI. Over 145 to 160 the chain is Cytoplasmic; sequence PFARDAVKKCFAVCLA.

The protein belongs to the SFT2 family.

The protein resides in the membrane. In terms of biological role, may be involved in fusion of retrograde transport vesicles derived from an endocytic compartment with the Golgi complex. The chain is Vesicle transport protein SFT2B from Homo sapiens (Human).